A 570-amino-acid polypeptide reads, in one-letter code: Urease subunit alpha 1 (570 aa).

The Urease domain maps to 131–570 (GGIDTHVHFI…VPMAQRYFLF (440 aa)). Positions 136, 138, and 219 each coordinate Ni(2+). N6-carboxylysine is present on Lys-219. His-221 lines the substrate pocket. 2 residues coordinate Ni(2+): His-248 and His-274. The active-site Proton donor is His-322. Asp-362 lines the Ni(2+) pocket.

Belongs to the metallo-dependent hydrolases superfamily. Urease alpha subunit family. As to quaternary structure, heterotrimer of UreA (gamma), UreB (beta) and UreC (alpha) subunits. Three heterotrimers associate to form the active enzyme. The cofactor is Ni cation. In terms of processing, carboxylation allows a single lysine to coordinate two nickel ions.

The protein resides in the cytoplasm. The catalysed reaction is urea + 2 H2O + H(+) = hydrogencarbonate + 2 NH4(+). Its pathway is nitrogen metabolism; urea degradation; CO(2) and NH(3) from urea (urease route): step 1/1. Its function is as follows. May protect brucellae during their passage through the stomach. The major route of infection in human brucellosis is oral. The chain is Urease subunit alpha 1 from Brucella abortus (strain 2308).